An 81-amino-acid chain; its full sequence is Sulfur carrier protein TusA (81 aa).

Cys19 (cysteine persulfide intermediate) is an active-site residue.

The protein belongs to the sulfur carrier protein TusA family. In terms of assembly, interacts with IscS.

Its subcellular location is the cytoplasm. It functions in the pathway tRNA modification. In terms of biological role, sulfur carrier protein involved in sulfur trafficking in the cell. Part of a sulfur-relay system required for 2-thiolation during synthesis of 2-thiouridine of the modified wobble base 5-methylaminomethyl-2-thiouridine (mnm(5)s(2)U) in tRNA. Interacts with IscS and stimulates its cysteine desulfurase activity. Accepts an activated sulfur from IscS, which is then transferred to TusD, and thus determines the direction of sulfur flow from IscS to 2-thiouridine formation. Also appears to be involved in sulfur transfer for the biosynthesis of molybdopterin. This is Sulfur carrier protein TusA from Citrobacter koseri (strain ATCC BAA-895 / CDC 4225-83 / SGSC4696).